Consider the following 49-residue polypeptide: MRVKVTLACTECKRRNYNTMKNKKNDPDRLEMNKYCPHCHKHAAHKETK.

Belongs to the bacterial ribosomal protein bL33 family.

The sequence is that of Large ribosomal subunit protein bL33 from Clostridium botulinum (strain ATCC 19397 / Type A).